The following is a 137-amino-acid chain: Large ribosomal subunit protein uL16 (137 aa).

It belongs to the universal ribosomal protein uL16 family. As to quaternary structure, part of the 50S ribosomal subunit.

In terms of biological role, binds 23S rRNA and is also seen to make contacts with the A and possibly P site tRNAs. The sequence is that of Large ribosomal subunit protein uL16 from Legionella pneumophila (strain Paris).